A 739-amino-acid polypeptide reads, in one-letter code: Probable beta-glucosidase L (739 aa).

A signal peptide spans 1–17 (MQNLFLSLLAAAVTVHA). A glycan (N-linked (GlcNAc...) asparagine) is linked at Asn224. Asp252 is an active-site residue. The N-linked (GlcNAc...) asparagine glycan is linked to Asn398.

Belongs to the glycosyl hydrolase 3 family.

The protein resides in the secreted. It carries out the reaction Hydrolysis of terminal, non-reducing beta-D-glucosyl residues with release of beta-D-glucose.. It participates in glycan metabolism; cellulose degradation. In terms of biological role, beta-glucosidases are one of a number of cellulolytic enzymes involved in the degradation of cellulosic biomass. Catalyzes the last step releasing glucose from the inhibitory cellobiose. The polypeptide is Probable beta-glucosidase L (bglL) (Neosartorya fischeri (strain ATCC 1020 / DSM 3700 / CBS 544.65 / FGSC A1164 / JCM 1740 / NRRL 181 / WB 181) (Aspergillus fischerianus)).